Here is a 131-residue protein sequence, read N- to C-terminus: MELVNILLESESERVKLYYDIPPKKSLRTKCEVDRAVKYFISVIKKYIKLKESTFYVVVKDTTLFTYKYDKGELTPVDNTYYTFSKELASTDYSSSEITSICFTITDDMSISVKPKTGYIVKVRSDNSRYY.

The protein belongs to the chordopoxvirinae E11 family.

Its subcellular location is the virion. This chain is Protein E11 homolog, found in Fowlpox virus (strain NVSL) (FPV).